A 286-amino-acid chain; its full sequence is Energy-coupling factor transporter ATP-binding protein EcfA2 (286 aa).

Residues 3-246 enclose the ABC transporter domain; that stretch reads IQFNQVSYIY…KTQLLKWHIE (244 aa). 40–47 is a binding site for ATP; sequence GQTGSGKS.

The protein belongs to the ABC transporter superfamily. Energy-coupling factor EcfA family. In terms of assembly, forms a stable energy-coupling factor (ECF) transporter complex composed of 2 membrane-embedded substrate-binding proteins (S component), 2 ATP-binding proteins (A component) and 2 transmembrane proteins (T component).

The protein localises to the cell membrane. ATP-binding (A) component of a common energy-coupling factor (ECF) ABC-transporter complex. Unlike classic ABC transporters this ECF transporter provides the energy necessary to transport a number of different substrates. The sequence is that of Energy-coupling factor transporter ATP-binding protein EcfA2 from Staphylococcus epidermidis (strain ATCC 35984 / DSM 28319 / BCRC 17069 / CCUG 31568 / BM 3577 / RP62A).